The chain runs to 336 residues: tRNA N6-adenosine threonylcarbamoyltransferase (336 aa).

Fe cation contacts are provided by His115, His119, and Tyr136. Substrate is bound by residues 136-140, Asp168, Glu185, and Ser266; that span reads YVAGG. Asp294 is a Fe cation binding site.

It belongs to the KAE1 / TsaD family. Fe(2+) serves as cofactor.

It localises to the cytoplasm. It catalyses the reaction L-threonylcarbamoyladenylate + adenosine(37) in tRNA = N(6)-L-threonylcarbamoyladenosine(37) in tRNA + AMP + H(+). In terms of biological role, required for the formation of a threonylcarbamoyl group on adenosine at position 37 (t(6)A37) in tRNAs that read codons beginning with adenine. Is probably involved in the transfer of the threonylcarbamoyl moiety of threonylcarbamoyl-AMP (TC-AMP) to the N6 group of A37. This chain is tRNA N6-adenosine threonylcarbamoyltransferase, found in Thermofilum pendens (strain DSM 2475 / Hrk 5).